A 469-amino-acid chain; its full sequence is Glutamate--tRNA ligase (469 aa).

The 'HIGH' region signature appears at 11-21 (PSPTGFIHLGN). Positions 118 to 131 (GEKPRYDGTWRPEP) are enriched in basic and acidic residues. The tract at residues 118–139 (GEKPRYDGTWRPEPGKVLPEPP) is disordered. Positions 243–247 (KMSKR) match the 'KMSKS' region motif. ATP is bound at residue K246.

The protein belongs to the class-I aminoacyl-tRNA synthetase family. Glutamate--tRNA ligase type 1 subfamily. As to quaternary structure, monomer.

It localises to the cytoplasm. The enzyme catalyses tRNA(Glu) + L-glutamate + ATP = L-glutamyl-tRNA(Glu) + AMP + diphosphate. In terms of biological role, catalyzes the attachment of glutamate to tRNA(Glu) in a two-step reaction: glutamate is first activated by ATP to form Glu-AMP and then transferred to the acceptor end of tRNA(Glu). This is Glutamate--tRNA ligase from Burkholderia pseudomallei (strain 668).